The chain runs to 92 residues: CRISPR-associated endoribonuclease Cas2 (92 aa).

Aspartate 9 serves as a coordination point for Mg(2+).

Belongs to the CRISPR-associated endoribonuclease Cas2 protein family. In terms of assembly, homodimer, forms a heterotetramer with a Cas1 homodimer. Mg(2+) serves as cofactor.

In terms of biological role, CRISPR (clustered regularly interspaced short palindromic repeat), is an adaptive immune system that provides protection against mobile genetic elements (viruses, transposable elements and conjugative plasmids). CRISPR clusters contain sequences complementary to antecedent mobile elements and target invading nucleic acids. CRISPR clusters are transcribed and processed into CRISPR RNA (crRNA). Functions as a ssRNA-specific endoribonuclease. Involved in the integration of spacer DNA into the CRISPR cassette. The chain is CRISPR-associated endoribonuclease Cas2 from Aeropyrum pernix (strain ATCC 700893 / DSM 11879 / JCM 9820 / NBRC 100138 / K1).